A 786-amino-acid chain; its full sequence is LPS-assembly protein LptD (786 aa).

Positions 1-24 (MSFTSRSLLASFTGCLLYGTPAIA) are cleaved as a signal peptide.

It belongs to the LptD family. In terms of assembly, component of the lipopolysaccharide transport and assembly complex. Interacts with LptE and LptA.

The protein localises to the cell outer membrane. Its function is as follows. Together with LptE, is involved in the assembly of lipopolysaccharide (LPS) at the surface of the outer membrane. The chain is LPS-assembly protein LptD from Aliivibrio fischeri (strain ATCC 700601 / ES114) (Vibrio fischeri).